The chain runs to 424 residues: Serine--tRNA ligase (424 aa).

Residue 232 to 234 (TAE) coordinates L-serine. 263–265 (RSE) contacts ATP. Position 286 (glutamate 286) interacts with L-serine. Residue 350 to 353 (EISS) coordinates ATP. An L-serine-binding site is contributed by serine 385.

This sequence belongs to the class-II aminoacyl-tRNA synthetase family. Type-1 seryl-tRNA synthetase subfamily. In terms of assembly, homodimer. The tRNA molecule binds across the dimer.

It is found in the cytoplasm. The catalysed reaction is tRNA(Ser) + L-serine + ATP = L-seryl-tRNA(Ser) + AMP + diphosphate + H(+). It catalyses the reaction tRNA(Sec) + L-serine + ATP = L-seryl-tRNA(Sec) + AMP + diphosphate + H(+). The protein operates within aminoacyl-tRNA biosynthesis; selenocysteinyl-tRNA(Sec) biosynthesis; L-seryl-tRNA(Sec) from L-serine and tRNA(Sec): step 1/1. Its function is as follows. Catalyzes the attachment of serine to tRNA(Ser). Is also able to aminoacylate tRNA(Sec) with serine, to form the misacylated tRNA L-seryl-tRNA(Sec), which will be further converted into selenocysteinyl-tRNA(Sec). The sequence is that of Serine--tRNA ligase from Latilactobacillus sakei subsp. sakei (strain 23K) (Lactobacillus sakei subsp. sakei).